Here is a 565-residue protein sequence, read N- to C-terminus: MDWIVHQLRVHPELAIFLTLFVGFWIGKIKIGKFSLGVVTSVLLVGVLVGQLDITVDGPIKSVFFLLFLFAIGYKVGPQFFRGLKKDGLPQMGFAAIMCVFCLIIPWILAKIMGYNVGEAAGLLAGSQTISAVIGVAGDTINELNISPETKEAYNNIIPVSYAVTYIFGTAGSAWVLGSLGPRLLGGLDKVKAACKELEAKMGNNEADQPGFMAAARPVTFRAYKIANEWFGDGKRVSDLESYFQENDKRLFVERVRQAGVIVKEVSPTFVLKKGDEVVLSGRREYVIGEEDWIGPEVLDPQLLDFPAEVLPVMVTRKTVAGEKVSTIRALKFMHGVSIRRIKRAGIDIPVLAQTVVDAGDMVELVGTKHEVDAAAKQLGYADRPTNQTDMIFVGLGILIGGLIGALSIHMGGVPISLSTSGGALIGGLFFGWLRSKHPTFGRIPEPALWILDNVGLNMFIAVVGIAAGPSFVQGFKEVGLSLFIVGALATSIPLIAGILMAKYIFKFHPALVLGCTAGARTTTAALGAIQEAVESETPALGYTVTYAVGNTLLIIWGVVIVLLM.

Helical transmembrane passes span L14–F34, L36–V56, M92–I112, V117–A137, and I157–L177. An RCK C-terminal domain is found at P296–Y381. Helical transmembrane passes span M391–M411, V414–L434, A448–A468, L481–M501, F508–I530, and V545–M565.

Belongs to the AAE transporter (TC 2.A.81) family.

Its subcellular location is the cell membrane. This is an uncharacterized protein from Bacteroides fragilis (strain YCH46).